Consider the following 303-residue polypeptide: Heme A synthase (303 aa).

The Cytoplasmic segment spans residues 1–8 (MFGKKNLK). The chain crosses the membrane as a helical span at residues 9-29 (WLGVVATLMMTFVQLGGALVT). The Extracellular portion of the chain corresponds to 30 to 67 (KTGSADGCGSSWPLCHGALIPEFFPIDTIIELSHRAVS). A disulfide bridge connects residues Cys-37 and Cys-44. Glu-60 is a catalytic residue. His-63 contacts heme o. Residues 68–88 (ALSLLMVLWLVITAWKHIGYI) traverse the membrane as a helical segment. Residues 89–93 (KEIKP) are Cytoplasmic-facing. Residues 94–114 (LSIISVGFLLLQALIGAAAVI) traverse the membrane as a helical segment. Residues 115 to 125 (WQQNDYVLALH) are Extracellular-facing. His-125 contacts heme o. The chain crosses the membrane as a helical span at residues 126-146 (FGISLISFSSVFLITLIIFSI). At 147–163 (DQKYEAAELYIKKPLRR) the chain is on the cytoplasmic side. Residues 164-184 (LTWLMAIIIYCGVYTGALVRH) traverse the membrane as a helical segment. Topologically, residues 185–215 (ADASLAYGGWPLPFHDLVPHSEQDWVQLTHR) are extracellular. Residue His-214 coordinates heme b. Residues 216–236 (IMAFIVFTIIMITYIHAVKNY) form a helical membrane-spanning segment. The Cytoplasmic portion of the chain corresponds to 237 to 244 (PNNRTVHY). A helical membrane pass occupies residues 245–265 (GYTAAFILVILQVITGALSIM). Residues 266–270 (TNVNL) are Extracellular-facing. Residues 271–291 (IIALFHALFITYLFGMTTYFI) traverse the membrane as a helical segment. Position 276 (His-276) interacts with heme b. The Cytoplasmic portion of the chain corresponds to 292 to 303 (MLMLRSVRSDKQ).

Belongs to the COX15/CtaA family. Type 1 subfamily. As to quaternary structure, interacts with CtaB. It depends on heme b as a cofactor.

The protein resides in the cell membrane. The enzyme catalyses Fe(II)-heme o + 2 A + H2O = Fe(II)-heme a + 2 AH2. It participates in porphyrin-containing compound metabolism; heme A biosynthesis; heme A from heme O: step 1/1. Catalyzes the conversion of heme O to heme A by two successive hydroxylations of the methyl group at C8. The first hydroxylation forms heme I, the second hydroxylation results in an unstable dihydroxymethyl group, which spontaneously dehydrates, resulting in the formyl group of heme A. This Staphylococcus aureus (strain bovine RF122 / ET3-1) protein is Heme A synthase.